A 34-amino-acid polypeptide reads, in one-letter code: Endoglucanase 1 (34 aa).

It carries out the reaction Endohydrolysis of (1-&gt;4)-beta-D-glucosidic linkages in cellulose, lichenin and cereal beta-D-glucans.. In Sclerotinia sclerotiorum (White mold), this protein is Endoglucanase 1.